A 267-amino-acid polypeptide reads, in one-letter code: Large ribosomal subunit protein uL2c (267 aa).

It belongs to the universal ribosomal protein uL2 family. As to quaternary structure, part of the 50S ribosomal subunit.

It is found in the plastid. The protein localises to the apicoplast. The protein is Large ribosomal subunit protein uL2c (rpl2) of Toxoplasma gondii.